The following is a 68-amino-acid chain: Negative regulator of P-body association (68 aa).

Residues 1–68 form a disordered region; the sequence is MGDQPCASGR…LKSHPPPPEK (68 aa).

As to quaternary structure, interacts with mRNA decapping proteins DCP1A, DCP2 and EDC4.

It is found in the cytoplasm. The protein resides in the P-body. Functionally, promotes dispersal of P-body components and is likely to play a role in the mRNA decapping process. The chain is Negative regulator of P-body association from Homo sapiens (Human).